The following is a 336-amino-acid chain: Eukaryotic translation initiation factor 3 subunit I (336 aa).

WD repeat units follow at residues 8–47, 50–91, 146–185, 190–229, and 287–326; these read GHER…RLGT, GHLG…KVWE, CNES…QLEN, EFDH…ILKT, and GHFG…FDFM.

The protein belongs to the eIF-3 subunit I family. As to quaternary structure, component of the eukaryotic translation initiation factor 3 (eIF-3) complex.

The protein localises to the cytoplasm. In terms of biological role, component of the eukaryotic translation initiation factor 3 (eIF-3) complex, which is involved in protein synthesis of a specialized repertoire of mRNAs and, together with other initiation factors, stimulates binding of mRNA and methionyl-tRNAi to the 40S ribosome. The eIF-3 complex specifically targets and initiates translation of a subset of mRNAs involved in cell proliferation. The chain is Eukaryotic translation initiation factor 3 subunit I (tif34) from Aspergillus terreus (strain NIH 2624 / FGSC A1156).